The following is a 98-amino-acid chain: Keratin-associated protein 3-3 (98 aa).

Tandem repeats lie at residues Cys3–Arg7, Cys47–Cys51, and Cys89–Cys93. The segment at Cys3–Gln59 is 3 X 5 AA repeats of C-C-X(3).

The protein belongs to the KRTAP type 3 family. In terms of assembly, interacts with hair keratins. In terms of tissue distribution, localized to the upper cortex of the hair shaft.

Its function is as follows. In the hair cortex, hair keratin intermediate filaments are embedded in an interfilamentous matrix, consisting of hair keratin-associated proteins (KRTAP), which are essential for the formation of a rigid and resistant hair shaft through their extensive disulfide bond cross-linking with abundant cysteine residues of hair keratins. The matrix proteins include the high-sulfur and high-glycine-tyrosine keratins. This chain is Keratin-associated protein 3-3 (KRTAP3-3), found in Homo sapiens (Human).